The chain runs to 137 residues: uncharacterized protein (137 aa).

Positions 1–34 (MAALSRALGPLRTPAPPLWIGLFLVATGSQQSLA) are cleaved as a signal peptide. The span at 33–45 (LAQPLPGNTTEAT) shows a compositional bias: polar residues. Disordered stretches follow at residues 33–54 (LAQP…ASGS) and 98–137 (VLSP…LGAS). A glycan (N-linked (GlcNAc...) asparagine) is linked at N40. Residues 121–137 (KLKEPQPQDHKPGLGAS) are compositionally biased toward basic and acidic residues.

It localises to the secreted. This is an uncharacterized protein from Homo sapiens (Human).